Here is a 312-residue protein sequence, read N- to C-terminus: tRNA uridine(34) hydroxylase (312 aa).

Residues 145 to 235 (ENKNSVLVDM…GIIKYVRDAR (91 aa)) enclose the Rhodanese domain. Cys-199 (cysteine persulfide intermediate) is an active-site residue.

It belongs to the TrhO family.

The enzyme catalyses uridine(34) in tRNA + AH2 + O2 = 5-hydroxyuridine(34) in tRNA + A + H2O. Its function is as follows. Catalyzes oxygen-dependent 5-hydroxyuridine (ho5U) modification at position 34 in tRNAs. The sequence is that of tRNA uridine(34) hydroxylase from Buchnera aphidicola subsp. Baizongia pistaciae (strain Bp).